Reading from the N-terminus, the 625-residue chain is 1-deoxy-D-xylulose-5-phosphate synthase (625 aa).

Thiamine diphosphate is bound by residues His-80 and 121–123 (GHS). Residue Asp-152 participates in Mg(2+) binding. Thiamine diphosphate contacts are provided by residues 153-154 (GA), Asn-181, Tyr-288, and Glu-370. Asn-181 serves as a coordination point for Mg(2+).

Belongs to the transketolase family. DXPS subfamily. Homodimer. Mg(2+) serves as cofactor. The cofactor is thiamine diphosphate.

The enzyme catalyses D-glyceraldehyde 3-phosphate + pyruvate + H(+) = 1-deoxy-D-xylulose 5-phosphate + CO2. The protein operates within metabolic intermediate biosynthesis; 1-deoxy-D-xylulose 5-phosphate biosynthesis; 1-deoxy-D-xylulose 5-phosphate from D-glyceraldehyde 3-phosphate and pyruvate: step 1/1. In terms of biological role, catalyzes the acyloin condensation reaction between C atoms 2 and 3 of pyruvate and glyceraldehyde 3-phosphate to yield 1-deoxy-D-xylulose-5-phosphate (DXP). The sequence is that of 1-deoxy-D-xylulose-5-phosphate synthase from Alteromonas mediterranea (strain DSM 17117 / CIP 110805 / LMG 28347 / Deep ecotype).